The chain runs to 530 residues: Glucose-6-phosphate isomerase (530 aa).

Glutamate 356 functions as the Proton donor in the catalytic mechanism. Catalysis depends on residues histidine 387 and lysine 502.

The protein belongs to the GPI family.

Its subcellular location is the cytoplasm. It catalyses the reaction alpha-D-glucose 6-phosphate = beta-D-fructose 6-phosphate. The protein operates within carbohydrate biosynthesis; gluconeogenesis. It functions in the pathway carbohydrate degradation; glycolysis; D-glyceraldehyde 3-phosphate and glycerone phosphate from D-glucose: step 2/4. Catalyzes the reversible isomerization of glucose-6-phosphate to fructose-6-phosphate. The polypeptide is Glucose-6-phosphate isomerase (Borreliella afzelii (strain PKo) (Borrelia afzelii)).